The primary structure comprises 136 residues: NADPH-dependent 7-cyano-7-deazaguanine reductase (136 aa).

The active-site Thioimide intermediate is the cysteine 53. The active-site Proton donor is aspartate 60. Residues 75 to 77 and 94 to 95 each bind substrate; these read VEL and HE.

This sequence belongs to the GTP cyclohydrolase I family. QueF type 1 subfamily.

The protein resides in the cytoplasm. The catalysed reaction is 7-aminomethyl-7-carbaguanine + 2 NADP(+) = 7-cyano-7-deazaguanine + 2 NADPH + 3 H(+). It participates in tRNA modification; tRNA-queuosine biosynthesis. In terms of biological role, catalyzes the NADPH-dependent reduction of 7-cyano-7-deazaguanine (preQ0) to 7-aminomethyl-7-deazaguanine (preQ1). This is NADPH-dependent 7-cyano-7-deazaguanine reductase from Trichormus variabilis (strain ATCC 29413 / PCC 7937) (Anabaena variabilis).